The chain runs to 459 residues: Cysteine--tRNA ligase (459 aa).

Position 29 (Cys-29) interacts with Zn(2+). Residues Pro-31–Asn-41 carry the 'HIGH' region motif. Cys-209, His-234, and Glu-238 together coordinate Zn(2+). A 'KMSKS' region motif is present at residues Lys-267 to Ser-271. Lys-270 is a binding site for ATP.

Belongs to the class-I aminoacyl-tRNA synthetase family. In terms of assembly, monomer. The cofactor is Zn(2+).

It localises to the cytoplasm. The catalysed reaction is tRNA(Cys) + L-cysteine + ATP = L-cysteinyl-tRNA(Cys) + AMP + diphosphate. This chain is Cysteine--tRNA ligase, found in Rhodospirillum rubrum (strain ATCC 11170 / ATH 1.1.1 / DSM 467 / LMG 4362 / NCIMB 8255 / S1).